Reading from the N-terminus, the 510-residue chain is MYSLDIIPGKLSLKQLREVSRHPTKLSLDPNALPDMLISADVVAQVIKEDKTVYGINTGFGLLANTRIAEKDLETLQRSIVLSHAAGIGEFMDDATVRLMIILKINSLSRGYSGIRPLVIDALIQLVNSEVYPCIPKKGSVGASGDLAPLAHMSTVLLGEGEARYQDKIISGKEALDIAGLTPITLAPKEGLALLNGTQASTAFALEGLFAAEDLYASATVCGAMSVEAALGSRKPFDPRIHRVRGHRSQMDAALAYRHLLAQSSEIGLSHQCCERVQDPYSLRCQPQVMGACLQQIRNSADILEIEANSVSDNPLVFADDGDIISGGNFHAEPVAMAADNLALAISEIGSLSERRMALLIDSGLSKLPPFLVDNGGVNSGFMIAQVTAAALASENKTLAHPASVDSLPTSANQEDHVSMATFAGRRLGDMAENTRGILAVELLAAAQGLDFRAPNKSSDRIEIAKSLLRERVDFYDKDRYFAPDIAKANSLLKEATYNHLMPETLLPSL.

The 5-imidazolinone (Ala-Gly) cross-link spans 143 to 145 (ASG). Ser-144 bears the 2,3-didehydroalanine (Ser) mark.

Belongs to the PAL/histidase family. Post-translationally, contains an active site 4-methylidene-imidazol-5-one (MIO), which is formed autocatalytically by cyclization and dehydration of residues Ala-Ser-Gly.

Its subcellular location is the cytoplasm. It catalyses the reaction L-histidine = trans-urocanate + NH4(+). Its pathway is amino-acid degradation; L-histidine degradation into L-glutamate; N-formimidoyl-L-glutamate from L-histidine: step 1/3. The protein is Histidine ammonia-lyase of Aliivibrio fischeri (strain MJ11) (Vibrio fischeri).